A 287-amino-acid polypeptide reads, in one-letter code: ATP synthase gamma chain (287 aa).

The protein belongs to the ATPase gamma chain family. As to quaternary structure, F-type ATPases have 2 components, CF(1) - the catalytic core - and CF(0) - the membrane proton channel. CF(1) has five subunits: alpha(3), beta(3), gamma(1), delta(1), epsilon(1). CF(0) has three main subunits: a, b and c.

It is found in the cell inner membrane. Functionally, produces ATP from ADP in the presence of a proton gradient across the membrane. The gamma chain is believed to be important in regulating ATPase activity and the flow of protons through the CF(0) complex. The protein is ATP synthase gamma chain of Azotobacter vinelandii (strain DJ / ATCC BAA-1303).